The following is a 361-amino-acid chain: Solute carrier family 25 member 3 (361 aa).

The N-terminal 49 residues, 1–49 (MFSSVAHLARANPFNTPHLQLVHDGLGDFRSRPPGPTGQPRRPRNLAAA), are a transit peptide targeting the mitochondrion. The segment at 25-44 (GLGDFRSRPPGPTGQPRRPR) is disordered. The Mitochondrial intermembrane portion of the chain corresponds to 50-62 (AVEEYSCEFGSAK). Solcar repeat units lie at residues 62–146 (KYYA…FKVL), 159–243 (WRTS…TVEA), and 260–338 (EQLV…VKVY). Residues 63–85 (YYALCGFGGVLSCGLTHTAVVPL) form a helical membrane-spanning segment. The Mitochondrial matrix segment spans residues 86 to 120 (DLVKCRMQVDPQKYKGIFNGFSVTLKEDGVRGLAK). Lys98 is modified (N6-acetyllysine). Position 111 is an N6-methyllysine (Lys111). Residues 121–140 (GWAPTFLGYSMQGLCKFGFY) form a helical membrane-spanning segment. Residues 141–160 (EVFKVLYSNMLGEENTYLWR) lie on the Mitochondrial intermembrane side of the membrane. A helical membrane pass occupies residues 161–182 (TSLYLAASASAEFFADIALAPM). Residues 183 to 217 (EAAKVRIQTQPGYANTLRDAAPKMYKEEGLKAFYK) lie on the Mitochondrial matrix side of the membrane. Tyr195 carries the phosphotyrosine modification. Lys208 is subject to N6-acetyllysine. The chain crosses the membrane as a helical span at residues 218-237 (GVAPLWMRQIPYTMMKFACF). Residues 238-260 (ERTVEALYKFVVPKPRSECSKPE) lie on the Mitochondrial intermembrane side of the membrane. A helical membrane pass occupies residues 261-283 (QLVVTFVAGYIAGVFCAIVSHPA). Topologically, residues 284–313 (DSVVSVLNKEKGSSASLVLKRLGFKGVWKG) are mitochondrial matrix. Residues 314 to 332 (LFARIIMIGTLTALQWFIY) form a helical membrane-spanning segment. Over 333-361 (DSVKVYFRLPRPPPPEMPESLKKKLGLTQ) the chain is Mitochondrial intermembrane.

The protein belongs to the mitochondrial carrier (TC 2.A.29) family. As to quaternary structure, interacts with PPIF; the interaction is impaired by CsA.

The protein localises to the mitochondrion inner membrane. The enzyme catalyses phosphate(in) + H(+)(in) = phosphate(out) + H(+)(out). Its function is as follows. Inorganic ion transporter that transports phosphate or copper ions across the mitochondrial inner membrane into the matrix compartment. Mediates proton-coupled symport of phosphate ions necessary for mitochondrial oxidative phosphorylation of ADP to ATP. Transports copper ions probably in the form of anionic copper(I) complexes to maintain mitochondrial matrix copper pool and to supply copper for cytochrome C oxidase complex assembly. May also play a role in regulation of the mitochondrial permeability transition pore (mPTP). The protein is Solute carrier family 25 member 3 of Pongo abelii (Sumatran orangutan).